A 7126-amino-acid polypeptide reads, in one-letter code: Replicase polyprotein 1ab (7126 aa).

The region spanning 25–151 (RSDHVACTVP…EHTFLLRKNG (127 aa)) is the CoV Nsp1 globular domain. The 29-residue stretch at 167-195 (TPYVEILDDLEADPTGKYSQNLLKKLIGG) folds into the BetaCoV Nsp1 C-terminal domain. One can recognise a CoV Nsp2 N-terminal domain in the interval 197–472 (CIPVDQYMCG…WDKVVETANL (276 aa)). Zn(2+) is bound by residues cysteine 339, cysteine 342, cysteine 358, and cysteine 360. Residues 339–360 (CNACGRGTWCTGNAIQGFACDC) form a C4 region. Residues 478–712 (QHSLNFCQQF…LDIMSKAMKL (235 aa)) enclose the CoV Nsp2 middle domain. The CoV Nsp2 C-terminal domain maps to 714–847 (HTNVSWAGTK…VSTLFRLKGG (134 aa)). Residues 851-960 (KKVTFGDVNT…MTFSINPVED (110 aa)) enclose the Ubiquitin-like 1 domain. Positions 1039-1061 (AQEPSVESTDSTPSTSTVVSEND) are disordered. Low complexity predominate over residues 1041-1059 (EPSVESTDSTPSTSTVVSE). Macro domains are found at residues 1159-1328 (DLSK…KPDG) and 1329-1453 (LVYS…AIQT). The DPUP domain occupies 1453–1526 (TPETAFINNV…LEACRAYLTS (74 aa)). Residues 1531–1586 (QVNIEVLVTIDGVNFRTVILNDATTFRKQLGATFYKGVDISDALPTVKMGGESLFV) form the Ubiquitin-like 2 domain. In terms of domain architecture, Peptidase C16 spans 1600–1871 (EYYGTSDVTF…KVEVNPDLSN (272 aa)). The active-site For PL-PRO activity is cysteine 1641. Cysteine 1721, cysteine 1724, cysteine 1756, and cysteine 1758 together coordinate Zn(2+). Residues 1721–1758 (CTVCGIRDIEYTGMRACVYAGVNSMEELQSVFNETCVC) form a C4-type zinc finger. Catalysis depends on for PL-PRO activity residues histidine 1807 and aspartate 1822. A Nucleic acid-binding domain is found at 1885–2002 (TIKYSPATIL…QLYDVAPIVL (118 aa)). Residues 2019–2140 (PNVPVVEDVS…AKITVTATTA (122 aa)) enclose the G2M domain. 3 consecutive transmembrane segments (helical) span residues 2119-2139 (VLLG…TATT), 2152-2172 (FVVN…LFFL), and 2229-2249 (LFLL…LVIF). The interval 2119–2402 (VLLGASSLFA…VTHIPLHGLV (284 aa)) is HD1. One can recognise a 3Ecto domain in the interval 2266–2332 (LAMYKEVRSY…LQMLQTHITS (67 aa)). Cystine bridges form between cysteine 2282–cysteine 2310 and cysteine 2300–cysteine 2307. Transmembrane regions (helical) follow at residues 2333–2353 (YVLN…YVLY), 2357–2377 (FNVL…SAFV), and 2382–2402 (YNYI…HGLV). Residues 2416-2506 (KFYSHVINGC…TLRRLIKPTD (91 aa)) form a Y1 region. One can recognise a CoV Nsp3 Y domain in the interval 2416–2789 (KFYSHVINGC…LSVKFSATKI (374 aa)). Zn(2+)-binding residues include histidine 2420, cysteine 2425, cysteine 2430, cysteine 2433, cysteine 2466, histidine 2469, cysteine 2473, and cysteine 2476. The ZF1 stretch occupies residues 2420 to 2433 (HVINGCKDTACLLC). Positions 2466 to 2476 (CCKHNWNCVEC) are ZF2. The tract at residues 2507 to 2605 (QSHYYVDSVV…LVDVNLVTTV (99 aa)) is Y2. Residues 2507-2789 (QSHYYVDSVV…LSVKFSATKI (283 aa)) are coV-Y. The tract at residues 2606–2688 (GDSREIAIKM…DALQYAHKND (83 aa)) is Y3. The Y4 stretch occupies residues 2689–2789 (IQLTTECYNN…LSVKFSATKI (101 aa)). Transmembrane regions (helical) follow at residues 2807–2827 (GYCI…FCLP), 3079–3099 (STSL…FYYI), 3112–3132 (CAVV…FIVA), and 3156–3176 (AFIM…IWML). The segment at 2807–3176 (GYCILTLFVF…FGTVVPIWML (370 aa)) is HD2. One can recognise a Nsp4C domain in the interval 3202 to 3298 (VFTDGKLNCS…NCSVTSSVLQ (97 aa)). The 306-residue stretch at 3299-3604 (SGLVKMSAPS…NMQVMGVVMQ (306 aa)) folds into the Peptidase C30 domain. Catalysis depends on for 3CL-PRO activity residues histidine 3339 and cysteine 3446. 7 helical membrane passes run 3610-3630 (ISYG…VSVM), 3644-3664 (TIPT…MFTV), 3669-3689 (TFLS…NIVY), 3714-3734 (RTTH…AIIV), 3742-3762 (MSNL…YVIG), 3791-3811 (LAKF…FILP), and 3815-3835 (LVLL…GVFS). Positions 3610–3835 (ISYGFMHWLM…MCTMYFGVFS (226 aa)) are HD3. Residues 3897-3979 (SKLTDLKCTS…DLFENSSVLQ (83 aa)) enclose the RdRp Nsp7 cofactor domain. Positions 3980–4178 (ATLTEFSHLA…RASSSAVKLQ (199 aa)) constitute a RdRp Nsp8 cofactor domain. One can recognise a Nsp9 ssRNA-binding domain in the interval 4179–4288 (NNEIHPKGLK…GHIAATVRLQ (110 aa)). An ExoN/MTase coactivator domain is found at 4289–4427 (AGANTEFASN…DALRNNTVPQ (139 aa)). Positions 4362, 4365, 4371, 4378, 4404, 4407, 4415, and 4417 each coordinate Zn(2+). Zinc fingers lie at residues 4362-4378 (CLYC…SGVC) and 4404-4417 (CNVC…GCNC). The NiRAN domain occupies 4433–4690 (FLNRVRGSSV…AAETHKDCDF (258 aa)). Positions 4638 and 4647 each coordinate Mn(2+). Residues 4695 to 4793 (IEWLLLEYDY…MNMDVNIHRH (99 aa)) form the Nsp12 Interface domain. Zn(2+)-binding residues include histidine 4724, cysteine 4730, cysteine 4735, cysteine 4739, and cysteine 4916. Residues 4794–5361 (RLALKELMMY…DLYSSPTTLQ (568 aa)) form the Nsp12 RNA-dependent RNA polymerase domain. The rdRp Fingers N-ter stretch occupies residues 4796–5010 (ALKELMMYAA…HQKMLKSMAA (215 aa)). Residues 5011 to 5049 (TRGATCVIGTTKFYGGWDFMLKTLYKDVESPHLMGWDYP) are rdRp Palm N-ter. The RdRp catalytic domain occupies 5041–5203 (PHLMGWDYPK…CYNSDYAAKG (163 aa)). The rdRp Fingers C-ter stretch occupies residues 5050-5108 (KCDRAMPNMCRILASLILARKHSTCCTNSDRFYRLANECAQVLSEYVLCGGGYYVKPGG). The Zn(2+) site is built by histidine 5071, cysteine 5074, and cysteine 5075. Residues 5109 to 5244 (TSSGDATTAY…EKGPHEFCSQ (136 aa)) form a rdRp Palm C-ter region. Catalysis depends on residues serine 5188, aspartate 5189, and aspartate 5190. The rdRp Thumb stretch occupies residues 5245-5361 (HTLYIKDGDD…DLYSSPTTLQ (117 aa)). In terms of domain architecture, CV ZBD spans 5362–5474 (AVGSCVVCHS…MEFNRLATCD (113 aa)). Zn(2+) contacts are provided by cysteine 5366, cysteine 5369, cysteine 5377, cysteine 5380, cysteine 5387, cysteine 5390, histidine 5394, histidine 5400, cysteine 5411, cysteine 5416, cysteine 5433, and histidine 5436. The (+)RNA virus helicase ATP-binding domain maps to 5618–5799 (TVPEEFANHV…MCNLGPDIFL (182 aa)). 5643–5650 (GPPGTGKS) contacts ATP. The (+)RNA virus helicase C-terminal domain occupies 5800 to 5974 (SVCYRCPKEI…GLFKDCSRED (175 aa)). The ExoN domain maps to 6031–6246 (LFITRDEAIR…RCLAIYDCFI (216 aa)). Catalysis depends on residues aspartate 6049, glutamate 6051, and glutamate 6150. Zn(2+) is bound by residues cysteine 6166, cysteine 6169, cysteine 6185, histidine 6188, histidine 6216, cysteine 6220, and histidine 6223. Residues histidine 6227 and aspartate 6232 contribute to the active site. Cysteine 6238 is a Zn(2+) binding site. The 228-residue stretch at 6255-6482 (YPYISHEQKL…NLWSTFVKVQ (228 aa)) folds into the N7-MTase domain. Position 6290–6296 (6290–6296 (DIGNPKG)) interacts with S-adenosyl-L-methionine. Residues 6368–6382 (CNGGSLYVNKHAFHT) form a gpppA-binding region. Zn(2+)-binding residues include cysteine 6406, cysteine 6428, cysteine 6439, and histidine 6442. One can recognise a Nsp15 N-terminal oligomerization domain in the interval 6483-6543 (GLENIAFNVI…NVAFELYAKR (61 aa)). One can recognise an AV-Nsp11N/CoV-Nsp15M domain in the interval 6544 to 6665 (AVRSHPDLNL…LYKKVNNEFV (122 aa)). Residues 6682–6821 (TALTPMEEDF…KDGKVQTFYP (140 aa)) form the NendoU domain. Catalysis depends on residues histidine 6712, histidine 6727, lysine 6767, lysine 6870, aspartate 6954, lysine 6994, and glutamate 7027. A Nidovirus-type SAM-dependent 2'-O-MTase domain is found at 6826 to 7120 (TNDWKPGLTM…TLNVSTDVLV (295 aa)).

This sequence belongs to the coronaviruses polyprotein 1ab family. As to quaternary structure, interacts with host PHB and PHB2. Interacts with papain-like protease nsp3 and non-structural protein 6. In terms of assembly, monomer. Homodimer. Only the homodimer shows catalytic activity. As to quaternary structure, interacts with nsp8 and nsp12 to form the replication-transcription complex (RTC): nsp12, nsp7, two subunits of nsp8, and up to two subunits of nsp13. Interacts with nsp7, nsp13 and nsp12 to form the replication-transcription complex (RTC): nsp12, nsp7, two subunits of nsp8, and up to two subunits of nsp13. In terms of assembly, interacts with nsp12. As to quaternary structure, interacts with proofreading exoribonuclease nsp14 and 2'-O-methyltransferase nsp16; these interactions enhance nsp14 and nsp16 enzymatic activities. Interacts with nsp7 and nsp8 to form the replication-transcription complex (RTC): nsp12, nsp7, two subunits of nsp8, and up to two subunits of nsp13. Interacts with nsp9. In terms of assembly, interacts with nsp8 to form the replication-transcription complex (RTC): nsp12, nsp7, two subunits of nsp8, and up to two subunits of nsp13. Mn(2+) is required as a cofactor. It depends on Mg(2+) as a cofactor. Post-translationally, specific enzymatic cleavages in vivo by its own proteases yield mature proteins. 3CL-PRO and PL-PRO proteinases are autocatalytically processed.

It is found in the host membrane. It localises to the host cytoplasm. Its subcellular location is the host perinuclear region. The protein localises to the host endoplasmic reticulum-Golgi intermediate compartment. It catalyses the reaction ATP + H2O = ADP + phosphate + H(+). The enzyme catalyses RNA(n) + a ribonucleoside 5'-triphosphate = RNA(n+1) + diphosphate. It carries out the reaction Thiol-dependent hydrolysis of ester, thioester, amide, peptide and isopeptide bonds formed by the C-terminal Gly of ubiquitin (a 76-residue protein attached to proteins as an intracellular targeting signal).. The catalysed reaction is a 5'-end (N(7)-methyl 5'-triphosphoguanosine)-ribonucleoside in mRNA + S-adenosyl-L-methionine = a 5'-end (N(7)-methyl 5'-triphosphoguanosine)-(2'-O-methyl-ribonucleoside) in mRNA + S-adenosyl-L-homocysteine + H(+). It catalyses the reaction uridylyl-uridylyl-ribonucleotide-RNA = a 3'-end uridylyl-2',3'-cyclophospho-uridine-RNA + a 5'-end dephospho-ribonucleoside-RNA. The enzyme catalyses a 5'-end diphospho-ribonucleoside in mRNA + GTP + H(+) = a 5'-end (5'-triphosphoguanosine)-ribonucleoside in mRNA + diphosphate. It carries out the reaction a 5'-end (5'-triphosphoguanosine)-ribonucleoside in mRNA + S-adenosyl-L-methionine = a 5'-end (N(7)-methyl 5'-triphosphoguanosine)-ribonucleoside in mRNA + S-adenosyl-L-homocysteine. In terms of biological role, the replicase polyprotein of coronaviruses is a multifunctional protein: it contains the activities necessary for the transcription of negative stranded RNA, leader RNA, subgenomic mRNAs and progeny virion RNA as well as proteinases responsible for the cleavage of the polyprotein into functional products. Inhibits host translation by interacting with the 40S ribosomal subunit. The nsp1-40S ribosome complex further induces an endonucleolytic cleavage near the 5'UTR of host mRNAs, targeting them for degradation. Viral mRNAs are not susceptible to nsp1-mediated endonucleolytic RNA cleavage thanks to the presence of a 5'-end leader sequence and are therefore protected from degradation. By suppressing host gene expression, nsp1 facilitates efficient viral gene expression in infected cells and evasion from host immune response. Functionally, may play a role in the modulation of host cell survival signaling pathway by interacting with host PHB and PHB2. Indeed, these two proteins play a role in maintaining the functional integrity of the mitochondria and protecting cells from various stresses. Its function is as follows. Responsible for the cleavages located at the N-terminus of the replicase polyprotein. In addition, PL-PRO possesses a deubiquitinating/deISGylating activity and processes both 'Lys-48'- and 'Lys-63'-linked polyubiquitin chains from cellular substrates. Participates together with nsp4 in the assembly of virally-induced cytoplasmic double-membrane vesicles necessary for viral replication. Antagonizes innate immune induction of type I interferon by blocking the phosphorylation, dimerization and subsequent nuclear translocation of host IRF3. Also prevents host NF-kappa-B signaling. In terms of biological role, participates in the assembly of virally-induced cytoplasmic double-membrane vesicles necessary for viral replication. Cleaves the C-terminus of replicase polyprotein at 11 sites. Recognizes substrates containing the core sequence [ILMVF]-Q-|-[SGACN]. Also able to bind an ADP-ribose-1''-phosphate (ADRP). Functionally, plays a role in the initial induction of autophagosomes from host endoplasmic reticulum. Later, limits the expansion of these phagosomes that are no longer able to deliver viral components to lysosomes. Its function is as follows. Forms a hexadecamer with nsp8 (8 subunits of each) that may participate in viral replication by acting as a primase. Alternatively, may synthesize substantially longer products than oligonucleotide primers. In terms of biological role, forms a hexadecamer with nsp7 (8 subunits of each) that may participate in viral replication by acting as a primase. Alternatively, may synthesize substantially longer products than oligonucleotide primers. Forms a primer, NSP9-pU, which is utilized by the polymerase for the initiation of RNA chains. Interacts with ribosome signal recognition particle RNA (SRP). Together with NSP8, suppress protein integration into the cell membrane, thereby disrupting host immune defenses. Functionally, plays a pivotal role in viral transcription by stimulating both nsp14 3'-5' exoribonuclease and nsp16 2'-O-methyltransferase activities. Therefore plays an essential role in viral mRNAs cap methylation. Its function is as follows. RNA-directed RNA polymerase that catalyzes the transcription of viral genomic and subgenomic RNAs. Acts in complex with nsp7 and nsp8 to transcribe both the minus and positive strands of genomic RNA. The kinase-like NiRAN domain of NSP12 attaches one or more nucleotides to the amino terminus of NSP9, forming a covalent RNA-protein intermediate that serves as transcription/replication primer. Subgenomic RNAs (sgRNAs) are formed by discontinuous transcription: The polymerase has the ability to pause at transcription-regulating sequences (TRS) and jump to the leader TRS, resulting in a major deletion. This creates a series of subgenomic RNAs that are replicated, transcribed and translated. In addition, Nsp12 is a subunit of the viral RNA capping enzyme that catalyzes the RNA guanylyltransferase reaction for genomic and sub-genomic RNAs. Subsequently, the NiRAN domain transfers RNA to GDP, and forms the core cap structure GpppA-RNA. In terms of biological role, multi-functional protein with a zinc-binding domain in N-terminus displaying RNA and DNA duplex-unwinding activities with 5' to 3' polarity. Activity of helicase is dependent on magnesium. Plays a role in viral RNA synthesis through two distinct activities. The N7-guanine methyltransferase activity plays a role in the formation of the cap structure GpppA-RNA. The proofreading exoribonuclease reduces the sensitivity of the virus to RNA mutagens during replication. This activity acts on both ssRNA and dsRNA in a 3'-5' direction. Functionally, plays a role in viral transcription/replication and prevents the simultaneous activation of host cell dsRNA sensors, such as MDA5/IFIH1, OAS, and PKR. Acts by degrading the 5'-polyuridines generated during replication of the poly(A) region of viral genomic and subgenomic RNAs. Catalyzes a two-step reaction in which a 2'3'-cyclic phosphate (2'3'-cP) is first generated by 2'-O transesterification, which is then hydrolyzed to a 3'-phosphate (3'-P). If not degraded, poly(U) RNA would hybridize with poly(A) RNA tails and activate host dsRNA sensors. Its function is as follows. Methyltransferase that mediates mRNA cap 2'-O-ribose methylation to the 5'-cap structure of viral mRNAs. N7-methyl guanosine cap is a prerequisite for binding of nsp16. Therefore plays an essential role in viral mRNAs cap methylation which is essential to evade immune system. The polypeptide is Replicase polyprotein 1ab (rep) (Bat coronavirus 133/2005 (BtCoV)).